Reading from the N-terminus, the 405-residue chain is Formate-dependent phosphoribosylglycinamide formyltransferase (405 aa).

N(1)-(5-phospho-beta-D-ribosyl)glycinamide is bound by residues 22 to 23 (EL) and Glu82. ATP contacts are provided by residues Arg115, Lys162, 167 to 172 (SSGKGQ), 202 to 205 (EGFI), and Glu210. The 201-residue stretch at 120 to 320 (RLAAETLGLA…EFELHARAIL (201 aa)) folds into the ATP-grasp domain. 2 residues coordinate Mg(2+): Glu279 and Glu291. N(1)-(5-phospho-beta-D-ribosyl)glycinamide is bound by residues Asp298, Lys367, and 374-375 (RR).

It belongs to the PurK/PurT family. In terms of assembly, homodimer.

The enzyme catalyses N(1)-(5-phospho-beta-D-ribosyl)glycinamide + formate + ATP = N(2)-formyl-N(1)-(5-phospho-beta-D-ribosyl)glycinamide + ADP + phosphate + H(+). Its pathway is purine metabolism; IMP biosynthesis via de novo pathway; N(2)-formyl-N(1)-(5-phospho-D-ribosyl)glycinamide from N(1)-(5-phospho-D-ribosyl)glycinamide (formate route): step 1/1. Involved in the de novo purine biosynthesis. Catalyzes the transfer of formate to 5-phospho-ribosyl-glycinamide (GAR), producing 5-phospho-ribosyl-N-formylglycinamide (FGAR). Formate is provided by PurU via hydrolysis of 10-formyl-tetrahydrofolate. The polypeptide is Formate-dependent phosphoribosylglycinamide formyltransferase (Delftia acidovorans (strain DSM 14801 / SPH-1)).